Reading from the N-terminus, the 413-residue chain is Arginine biosynthesis bifunctional protein ArgJ (413 aa).

6 residues coordinate substrate: Thr160, Lys186, Thr197, Glu277, Asn408, and Thr413. Thr197 acts as the Nucleophile in catalysis.

This sequence belongs to the ArgJ family. As to quaternary structure, heterotetramer of two alpha and two beta chains.

The protein localises to the cytoplasm. The catalysed reaction is N(2)-acetyl-L-ornithine + L-glutamate = N-acetyl-L-glutamate + L-ornithine. It carries out the reaction L-glutamate + acetyl-CoA = N-acetyl-L-glutamate + CoA + H(+). It functions in the pathway amino-acid biosynthesis; L-arginine biosynthesis; L-ornithine and N-acetyl-L-glutamate from L-glutamate and N(2)-acetyl-L-ornithine (cyclic): step 1/1. Its pathway is amino-acid biosynthesis; L-arginine biosynthesis; N(2)-acetyl-L-ornithine from L-glutamate: step 1/4. Its function is as follows. Catalyzes two activities which are involved in the cyclic version of arginine biosynthesis: the synthesis of N-acetylglutamate from glutamate and acetyl-CoA as the acetyl donor, and of ornithine by transacetylation between N(2)-acetylornithine and glutamate. The polypeptide is Arginine biosynthesis bifunctional protein ArgJ (Prochlorococcus marinus (strain SARG / CCMP1375 / SS120)).